The chain runs to 218 residues: MGTRDDEYDYLFKVVLIGDSGVGKSNLLSRFTRNEFNLESKSTIGVEFATRSIQVDGKTIKAQIWDTAGQERYRAITSAYYRGAVGALLVYDIAKHLTYENVERWLKELRDHADSNIVIMLVGNKSDLRHLRAVPTDEARAFAEKNNLSFIETSALDSTNVEEAFKNILTEIYRIVSQKQIADRAAHDESPGNNVVDISVPPTTDGQKPNKLQCCQNL.

An N-acetylglycine modification is found at Gly2. Residue Arg4 is modified to Citrulline. The GTP site is built by Ser20, Gly21, Gly23, Lys24, Ser25, Asn26, Asn37, Leu38, Ser40, Ser42, and Thr43. Ser25 is a binding site for Mg(2+). Positions 36-47 (FNLESKSTIGVE) match the Switch 1 motif. Positions 43 and 66 each coordinate Mg(2+). The Switch 2 signature appears at 67-86 (TAGQERYRAITSAYYRGAVG). Residues Gly69, Asn124, Lys125, Asp127, Ala155, and Leu156 each contribute to the GTP site. The disordered stretch occupies residues 184–218 (RAAHDESPGNNVVDISVPPTTDGQKPNKLQCCQNL). Residues Cys214 and Cys215 are each lipidated (S-geranylgeranyl cysteine). Cys215 is modified (cysteine methyl ester). A propeptide spans 216–218 (QNL) (removed in mature form).

It belongs to the small GTPase superfamily. Rab family. As to quaternary structure, interacts with KCNMA1. Interacts with RAB11FIP1, RAB11FIP2, RAB11FIP3 and RAB11FIP4. May interact with TBC1D14. Interacts with ATP6V1E1. Interacts with PI4KB. Interacts (GDP-bound form) with ZFYVE27. Interacts (GDP-bound form) with KIF5A in a ZFYVE27-dependent manner. Interacts with RELCH. Interacts (in GTP-bound form) with TBC1D8B (via domain Rab-GAP TBC). Forms a complex containing RAB11B, ASAP1, Rabin8/RAB3IP, RAP11FIP3 and ARF4. Interacts with WDR44. The cofactor is Mg(2+). Citrullinated by PADI4. Post-translationally, (Microbial infection) Glycosylated on arginine residues by S.typhimurium protein Ssek3.

The protein localises to the recycling endosome membrane. It localises to the cytoplasmic vesicle. Its subcellular location is the secretory vesicle. It is found in the synaptic vesicle membrane. The protein resides in the phagosome membrane. The enzyme catalyses GTP + H2O = GDP + phosphate + H(+). With respect to regulation, regulated by guanine nucleotide exchange factors (GEFs) which promote the exchange of bound GDP for free GTP. Regulated by GTPase activating proteins (GAPs) which increase the GTP hydrolysis activity. Inhibited by GDP dissociation inhibitors (GDIs) which prevent Rab-GDP dissociation. In terms of biological role, the small GTPases Rab are key regulators of intracellular membrane trafficking, from the formation of transport vesicles to their fusion with membranes. Rabs cycle between an inactive GDP-bound form and an active GTP-bound form that is able to recruit to membranes different set of downstream effectors directly responsible for vesicle formation, movement, tethering and fusion. The small Rab GTPase RAB11B plays a role in endocytic recycling, regulating apical recycling of several transmembrane proteins including cystic fibrosis transmembrane conductance regulator/CFTR, epithelial sodium channel/ENaC, potassium voltage-gated channel, and voltage-dependent L-type calcium channel. May also regulate constitutive and regulated secretion, like insulin granule exocytosis. Required for melanosome transport and release from melanocytes. Also regulates V-ATPase intracellular transport in response to extracellular acidosis. Promotes Rabin8/RAB3IP preciliary vesicular trafficking to mother centriole by forming a ciliary targeting complex containing Rab11, ASAP1, Rabin8/RAB3IP, RAB11FIP3 and ARF4, thereby regulating ciliogenesis initiation. On the contrary, upon LPAR1 receptor signaling pathway activation, interaction with phosphorylated WDR44 prevents Rab11-RAB3IP-RAB11FIP3 complex formation and cilia growth. The protein is Ras-related protein Rab-11B of Homo sapiens (Human).